A 138-amino-acid polypeptide reads, in one-letter code: Putative pre-16S rRNA nuclease (138 aa).

This sequence belongs to the YqgF nuclease family.

It localises to the cytoplasm. Functionally, could be a nuclease involved in processing of the 5'-end of pre-16S rRNA. The sequence is that of Putative pre-16S rRNA nuclease from Helicobacter hepaticus (strain ATCC 51449 / 3B1).